The following is a 97-amino-acid chain: Co-chaperonin GroES (97 aa).

The protein belongs to the GroES chaperonin family. Heptamer of 7 subunits arranged in a ring. Interacts with the chaperonin GroEL.

It localises to the cytoplasm. In terms of biological role, together with the chaperonin GroEL, plays an essential role in assisting protein folding. The GroEL-GroES system forms a nano-cage that allows encapsulation of the non-native substrate proteins and provides a physical environment optimized to promote and accelerate protein folding. GroES binds to the apical surface of the GroEL ring, thereby capping the opening of the GroEL channel. The chain is Co-chaperonin GroES from Stutzerimonas stutzeri (strain A1501) (Pseudomonas stutzeri).